The primary structure comprises 202 residues: Glycerol-3-phosphate acyltransferase (202 aa).

Transmembrane regions (helical) follow at residues 2–22 (MIVI…GYVI), 54–74 (FLVT…PLWL), 88–108 (NGLI…YLGF), 120–140 (VILG…FGIL), 141–161 (YLTK…VIGA), and 162–182 (LLIR…LLII).

This sequence belongs to the PlsY family. In terms of assembly, probably interacts with PlsX.

It localises to the cell membrane. The enzyme catalyses an acyl phosphate + sn-glycerol 3-phosphate = a 1-acyl-sn-glycero-3-phosphate + phosphate. It participates in lipid metabolism; phospholipid metabolism. Functionally, catalyzes the transfer of an acyl group from acyl-phosphate (acyl-PO(4)) to glycerol-3-phosphate (G3P) to form lysophosphatidic acid (LPA). This enzyme utilizes acyl-phosphate as fatty acyl donor, but not acyl-CoA or acyl-ACP. The chain is Glycerol-3-phosphate acyltransferase from Staphylococcus saprophyticus subsp. saprophyticus (strain ATCC 15305 / DSM 20229 / NCIMB 8711 / NCTC 7292 / S-41).